A 196-amino-acid polypeptide reads, in one-letter code: Nucleoid occlusion factor SlmA (196 aa).

One can recognise an HTH tetR-type domain in the interval 7-68 (TNRREEILQA…GLIEFIEEAL (62 aa)). Residues 31 to 50 (TTAKLAKQVGVSEAALYRHF) constitute a DNA-binding region (H-T-H motif). Residues 110 to 142 (HALMFENERLRDRINQLFERIETQLRQILRERK) adopt a coiled-coil conformation.

This sequence belongs to the nucleoid occlusion factor SlmA family. Homodimer. Interacts with FtsZ.

It localises to the cytoplasm. It is found in the nucleoid. Required for nucleoid occlusion (NO) phenomenon, which prevents Z-ring formation and cell division over the nucleoid. Acts as a DNA-associated cell division inhibitor that binds simultaneously chromosomal DNA and FtsZ, and disrupts the assembly of FtsZ polymers. SlmA-DNA-binding sequences (SBS) are dispersed on non-Ter regions of the chromosome, preventing FtsZ polymerization at these regions. In Vibrio campbellii (strain ATCC BAA-1116), this protein is Nucleoid occlusion factor SlmA.